We begin with the raw amino-acid sequence, 212 residues long: GTP-binding protein EngB (212 aa).

The 177-residue stretch at 36–212 (TAPEVAFAGR…LRAAVYDAII (177 aa)) folds into the EngB-type G domain. Residues 44–51 (GRSNVGKS), 71–75 (GRTQE), 91–94 (DMPG), 158–161 (TKSD), and 192–194 (TSS) contribute to the GTP site. Mg(2+) is bound by residues Ser-51 and Thr-73.

It belongs to the TRAFAC class TrmE-Era-EngA-EngB-Septin-like GTPase superfamily. EngB GTPase family. Requires Mg(2+) as cofactor.

Functionally, necessary for normal cell division and for the maintenance of normal septation. The protein is GTP-binding protein EngB of Zymomonas mobilis subsp. mobilis (strain ATCC 31821 / ZM4 / CP4).